The following is a 156-amino-acid chain: ATP synthase subunit b (156 aa).

The helical transmembrane segment at 12 to 32 threads the bilayer; it reads VAFFIFVLFCMKFVWPPVIAA.

It belongs to the ATPase B chain family. F-type ATPases have 2 components, F(1) - the catalytic core - and F(0) - the membrane proton channel. F(1) has five subunits: alpha(3), beta(3), gamma(1), delta(1), epsilon(1). F(0) has three main subunits: a(1), b(2) and c(10-14). The alpha and beta chains form an alternating ring which encloses part of the gamma chain. F(1) is attached to F(0) by a central stalk formed by the gamma and epsilon chains, while a peripheral stalk is formed by the delta and b chains.

The protein resides in the cell inner membrane. Its function is as follows. F(1)F(0) ATP synthase produces ATP from ADP in the presence of a proton or sodium gradient. F-type ATPases consist of two structural domains, F(1) containing the extramembraneous catalytic core and F(0) containing the membrane proton channel, linked together by a central stalk and a peripheral stalk. During catalysis, ATP synthesis in the catalytic domain of F(1) is coupled via a rotary mechanism of the central stalk subunits to proton translocation. In terms of biological role, component of the F(0) channel, it forms part of the peripheral stalk, linking F(1) to F(0). In Pseudomonas paraeruginosa (strain DSM 24068 / PA7) (Pseudomonas aeruginosa (strain PA7)), this protein is ATP synthase subunit b.